Here is a 133-residue protein sequence, read N- to C-terminus: Fatty acid-binding protein, heart (133 aa).

Alanine 2 is modified (N-acetylalanine). Residue threonine 8 is modified to Phosphothreonine. A Phosphotyrosine; by Tyr-kinases modification is found at tyrosine 20. Phosphoserine is present on serine 23. Threonine 30 is modified (phosphothreonine). Serine 83 carries the post-translational modification Phosphoserine. Residue 127 to 129 (RTY) coordinates (9Z)-octadecenoate. A hexadecanoate-binding site is contributed by 127–129 (RTY). 127 to 129 (RTY) serves as a coordination point for octadecanoate.

It belongs to the calycin superfamily. Fatty-acid binding protein (FABP) family.

The protein resides in the cytoplasm. FABPs are thought to play a role in the intracellular transport of long-chain fatty acids and their acyl-CoA esters. This chain is Fatty acid-binding protein, heart (Fabp3), found in Mus musculus (Mouse).